Here is a 285-residue protein sequence, read N- to C-terminus: ATP synthase gamma chain (285 aa).

This sequence belongs to the ATPase gamma chain family. As to quaternary structure, F-type ATPases have 2 components, CF(1) - the catalytic core - and CF(0) - the membrane proton channel. CF(1) has five subunits: alpha(3), beta(3), gamma(1), delta(1), epsilon(1). CF(0) has three main subunits: a, b and c.

It localises to the cell membrane. Its function is as follows. Produces ATP from ADP in the presence of a proton gradient across the membrane. The gamma chain is believed to be important in regulating ATPase activity and the flow of protons through the CF(0) complex. In Dehalococcoides mccartyi (strain CBDB1), this protein is ATP synthase gamma chain.